The chain runs to 444 residues: Glutamyl-tRNA reductase (444 aa).

Residues 41 to 44 (TCNR), S102, 107 to 109 (ERE), and Q113 each bind substrate. C42 functions as the Nucleophile in the catalytic mechanism. An NADP(+)-binding site is contributed by 181 to 186 (GTGSYA).

The protein belongs to the glutamyl-tRNA reductase family. Homodimer.

The catalysed reaction is (S)-4-amino-5-oxopentanoate + tRNA(Glu) + NADP(+) = L-glutamyl-tRNA(Glu) + NADPH + H(+). The protein operates within porphyrin-containing compound metabolism; protoporphyrin-IX biosynthesis; 5-aminolevulinate from L-glutamyl-tRNA(Glu): step 1/2. Functionally, catalyzes the NADPH-dependent reduction of glutamyl-tRNA(Glu) to glutamate 1-semialdehyde (GSA). The protein is Glutamyl-tRNA reductase of Cutibacterium acnes (strain DSM 16379 / KPA171202) (Propionibacterium acnes).